A 456-amino-acid chain; its full sequence is Proline-specific permease ProY (456 aa).

Residues 1–17 lie on the Cytoplasmic side of the membrane; the sequence is MESNNKLKRGLSTRHIR. 2 consecutive transmembrane segments (helical) span residues 18–38 and 39–59; these read FMAL…DAIK and MAGP…YIIM. Over 60–95 the chain is Cytoplasmic; it reads RALGEMSVHNPAASSFSRYAQENLGPLAGYITGWTY. Helical transmembrane passes span 96 to 116 and 117 to 137; these read CFEI…YMGV and WFPA…ICAI. Residues 138-156 lie on the Cytoplasmic side of the membrane; it reads NLMSVKVFGELEFWFSFFK. Residues 157–177 traverse the membrane as a helical segment; that stretch reads VATIIIMIVAGIGIIVWGIGN. The Periplasmic portion of the chain corresponds to 178–197; it reads GGQPTGIHNLWSNGGFFSNG. Residues 198-218 form a helical membrane-spanning segment; that stretch reads WLGMIMSLQMVMFAYGGIEII. Residues 219–242 lie on the Cytoplasmic side of the membrane; the sequence is GITAGEAKDPEKSIPRAINSVPMR. A helical transmembrane segment spans residues 243 to 263; that stretch reads ILVFYVGTLFVIMSIYPWNQV. At 264–277 the chain is on the periplasmic side; it reads GTNGSPFVLTFQHM. Residues 278-298 traverse the membrane as a helical segment; it reads GITFAASILNFVVLTASLSAI. The Cytoplasmic segment spans residues 299 to 331; it reads NSDVFGVGRMLHGMAEQGSAPKVFAKTSRRGIP. A helical membrane pass occupies residues 332–352; sequence WVTVLVMTIALLFAVYLNYIM. The Periplasmic segment spans residues 353–355; that stretch reads PEN. The helical transmembrane segment at 356-376 threads the bilayer; the sequence is VFLVIASLATFATVWVWIMIL. The Cytoplasmic portion of the chain corresponds to 377-399; it reads LSQIAFRRRLPPEEVKALKFKVP. A helical transmembrane segment spans residues 400 to 420; it reads GGVVTTIAGLIFLVFIIALIG. The Periplasmic portion of the chain corresponds to 421-424; that stretch reads YHPD. The helical transmembrane segment at 425–445 threads the bilayer; the sequence is TRISLYVGFAWIVLLLIGWIF. Residues 446-456 are Cytoplasmic-facing; the sequence is KRRRDRQLAQA.

Belongs to the amino acid-polyamine-organocation (APC) superfamily. Amino acid transporter (AAT) (TC 2.A.3.1) family.

Its subcellular location is the cell inner membrane. In terms of biological role, permease that is involved in the transport across the cytoplasmic membrane of proline. The protein is Proline-specific permease ProY (proY) of Salmonella typhimurium (strain LT2 / SGSC1412 / ATCC 700720).